A 128-amino-acid polypeptide reads, in one-letter code: Large ribosomal subunit protein bL12 (128 aa).

This sequence belongs to the bacterial ribosomal protein bL12 family. In terms of assembly, homodimer. Part of the ribosomal stalk of the 50S ribosomal subunit. Forms a multimeric L10(L12)X complex, where L10 forms an elongated spine to which 2 to 4 L12 dimers bind in a sequential fashion. Binds GTP-bound translation factors.

Functionally, forms part of the ribosomal stalk which helps the ribosome interact with GTP-bound translation factors. Is thus essential for accurate translation. The polypeptide is Large ribosomal subunit protein bL12 (Thermosipho africanus (strain TCF52B)).